Here is a 119-residue protein sequence, read N- to C-terminus: Large ribosomal subunit protein bL20 (119 aa).

Belongs to the bacterial ribosomal protein bL20 family.

Binds directly to 23S ribosomal RNA and is necessary for the in vitro assembly process of the 50S ribosomal subunit. It is not involved in the protein synthesizing functions of that subunit. The sequence is that of Large ribosomal subunit protein bL20 from Bradyrhizobium sp. (strain BTAi1 / ATCC BAA-1182).